We begin with the raw amino-acid sequence, 344 residues long: Dihydroorotate dehydrogenase (quinone) (344 aa).

FMN-binding positions include 65–69 (AGFDK) and Thr89. Residue Lys69 participates in substrate binding. 114–118 (NRMGF) contacts substrate. FMN is bound by residues Asn145 and Asn178. Residue Asn178 participates in substrate binding. The Nucleophile role is filled by Ser181. Asn183 contributes to the substrate binding site. 2 residues coordinate FMN: Lys215 and Thr243. Residue 244 to 245 (NT) coordinates substrate. FMN contacts are provided by residues Gly269, Gly298, and 319–320 (YT).

Belongs to the dihydroorotate dehydrogenase family. Type 2 subfamily. Monomer. Requires FMN as cofactor.

It localises to the cell membrane. It catalyses the reaction (S)-dihydroorotate + a quinone = orotate + a quinol. Its pathway is pyrimidine metabolism; UMP biosynthesis via de novo pathway; orotate from (S)-dihydroorotate (quinone route): step 1/1. Its function is as follows. Catalyzes the conversion of dihydroorotate to orotate with quinone as electron acceptor. The polypeptide is Dihydroorotate dehydrogenase (quinone) (Clavibacter michiganensis subsp. michiganensis (strain NCPPB 382)).